We begin with the raw amino-acid sequence, 567 residues long: Geranylgeranyl transferase type-2 subunit alpha (567 aa).

PFTA repeat units lie at residues 44-78, 88-122, 124-158, 159-193, 207-241, and 363-397; these read LDES…RLEV, LVKA…RLPE, NWAR…QAAV, PPAE…QLHP, VLLK…RADP, and VLQS…ALDP. Ser-98 carries the phosphoserine modification. LRR repeat units lie at residues 442 to 463, 464 to 486, 487 to 508, 509 to 530, and 534 to 555; these read DVRV…EQLL, LVTH…AALR, CLEV…TNLP, RLQE…QPLA, and RLVL…SEHL.

The protein belongs to the protein prenyltransferase subunit alpha family. Heterotrimer composed of RABGGTA, RABGGTB and CHM; within this trimer, RABGGTA and RABGGTB form the catalytic component B, while CHM (component A) mediates peptide substrate binding. The Rab GGTase dimer (RGGT) interacts with CHM (component A) prior to Rab protein binding; the association is stabilized by geranylgeranyl pyrophosphate (GGpp). The CHM:RGGT:Rab complex is destabilized by GGpp. Interacts with non-phosphorylated form of RAB8A; phosphorylation of RAB8A disrupts this interaction.

It catalyses the reaction geranylgeranyl diphosphate + L-cysteinyl-[protein] = S-geranylgeranyl-L-cysteinyl-[protein] + diphosphate. The enzymatic reaction requires the aid of a Rab escort protein (also called component A), such as CHM. Catalyzes the transfer of a geranylgeranyl moiety from geranylgeranyl diphosphate to both cysteines of Rab proteins with the C-terminal sequence -XXCC, -XCXC and -CCXX, such as RAB1A, RAB3A, RAB5A and RAB7A. The sequence is that of Geranylgeranyl transferase type-2 subunit alpha (RABGGTA) from Sus scrofa (Pig).